The chain runs to 1181 residues: Poly [ADP-ribose] polymerase tankyrase (1181 aa).

ANK repeat units lie at residues 56 to 85, 89 to 118, 122 to 151, 209 to 238, 242 to 271, 275 to 304, 362 to 394, 398 to 427, 431 to 458, 483 to 513, 519 to 548, 552 to 581, 585 to 614, 638 to 668, 672 to 701, 705 to 734, 738 to 767, and 771 to 799; these read RKSTPLHFAAGYGRREVVEFLLNSGASIQA, GGLHPLHNCCSFGHAEVVRLLLKAGASPNT, WNYTPLHEAASKGKVDVCLALLQHGANHTI, RRSTPLHLAAGYNRIGIVEILLANGADVHA, GGLVPLHNACSYGHFDVTKLLIQAGANVNA, WAFTPLHEAASKSRVEVCSLLLSRGADPTL, TGDTPLHLAVVSPDGKRKQLMELLTRKGSLLNE, AFLTPLHLAAELLHYDAMEVLLKQGAKVNA, LGQTPLHRCARDEQAVRLLLSYAADTNI, DSETHLLEAAKAGDLDTVRRIVLNNPISVNC, RHSTPLHFAAGFNRVPVVQFLLEHGAEVYA, GGLVPLHNACSYGHYEVTELLVKHGANVNV, WKFTPLHEAAAKGKYDICKLLLKHGADPMK, RGPSALLDAAKKGNLARVQRLVTPESINCRD, RNSTPLHLAAGYNNFECAEYLLENGADVNA, GGLIPLHNASSYGHLDIAALLIKHKTVVNA, WGFTPLHEAAQKGRTQLCSLLLAHGADAYM, and EGQTPIELATADDVKCLLQDAMATSLSQQ. Disordered stretches follow at residues 807-834 and 864-886; these read SLTSSSPAPDATAAAAPGTSSSSSSAIL and RISPAQGAEANGAEGSSSDDLLP. Residues 889–952 form the SAM domain; it reads DTITNVSGFL…LKGIAQLRST (64 aa). The PARP catalytic domain maps to 969–1174; that stretch reads LPDDKEFVAV…YQIVKPDDSS (206 aa). Cys-1091, His-1094, Cys-1099, and Cys-1102 together coordinate Zn(2+).

The protein belongs to the ARTD/PARP family. Interacts (via ANK repeats) with PI31.

It catalyses the reaction NAD(+) + (ADP-D-ribosyl)n-acceptor = nicotinamide + (ADP-D-ribosyl)n+1-acceptor + H(+).. The enzyme catalyses L-aspartyl-[protein] + NAD(+) = 4-O-(ADP-D-ribosyl)-L-aspartyl-[protein] + nicotinamide. The catalysed reaction is L-glutamyl-[protein] + NAD(+) = 5-O-(ADP-D-ribosyl)-L-glutamyl-[protein] + nicotinamide. Stimulates proteasome activity, probably by ADP-ribosylation of PI31. Modulates 26S proteasome assembly. This Drosophila melanogaster (Fruit fly) protein is Poly [ADP-ribose] polymerase tankyrase.